Consider the following 138-residue polypeptide: Putative pre-16S rRNA nuclease (138 aa).

The protein belongs to the YqgF nuclease family.

Its subcellular location is the cytoplasm. Its function is as follows. Could be a nuclease involved in processing of the 5'-end of pre-16S rRNA. In Bacteroides fragilis (strain ATCC 25285 / DSM 2151 / CCUG 4856 / JCM 11019 / LMG 10263 / NCTC 9343 / Onslow / VPI 2553 / EN-2), this protein is Putative pre-16S rRNA nuclease.